A 130-amino-acid chain; its full sequence is Protein ApaG (130 aa).

Residues 3–127 (STITRDIQIT…FSLDSPFSRQ (125 aa)) form the ApaG domain.

This chain is Protein ApaG, found in Beijerinckia indica subsp. indica (strain ATCC 9039 / DSM 1715 / NCIMB 8712).